A 469-amino-acid polypeptide reads, in one-letter code: Glutamate--tRNA ligase 2 (469 aa).

The 'HIGH' region motif lies at 10–20; that stretch reads PSPTGYLHIGG. The Zn(2+) site is built by Cys99, Cys101, Cys126, and Asp128. The 'KMSKS' region motif lies at 237-241; it reads RLSKR. Lys240 provides a ligand contact to ATP.

The protein belongs to the class-I aminoacyl-tRNA synthetase family. Glutamate--tRNA ligase type 1 subfamily. Monomer. The cofactor is Zn(2+).

Its subcellular location is the cytoplasm. It catalyses the reaction tRNA(Glu) + L-glutamate + ATP = L-glutamyl-tRNA(Glu) + AMP + diphosphate. Functionally, catalyzes the attachment of glutamate to tRNA(Glu) in a two-step reaction: glutamate is first activated by ATP to form Glu-AMP and then transferred to the acceptor end of tRNA(Glu). This chain is Glutamate--tRNA ligase 2, found in Coxiella burnetii (strain CbuG_Q212) (Coxiella burnetii (strain Q212)).